A 38-amino-acid polypeptide reads, in one-letter code: ATP synthase subunit O, mitochondrial (38 aa).

This sequence belongs to the ATPase delta chain family. As to quaternary structure, F-type ATPases have 2 components, CF(1) - the catalytic core - and CF(0) - the membrane proton channel. CF(1) has five subunits: alpha(3), beta(3), gamma(1), delta(1), epsilon(1). CF(0) has three main subunits: a, b and c.

It is found in the mitochondrion. The protein localises to the mitochondrion inner membrane. Its function is as follows. Mitochondrial membrane ATP synthase (F(1)F(0) ATP synthase or Complex V) produces ATP from ADP in the presence of a proton gradient across the membrane which is generated by electron transport complexes of the respiratory chain. F-type ATPases consist of two structural domains, F(1) - containing the extramembraneous catalytic core and F(0) - containing the membrane proton channel, linked together by a central stalk and a peripheral stalk. During catalysis, ATP synthesis in the catalytic domain of F(1) is coupled via a rotary mechanism of the central stalk subunits to proton translocation. Part of the complex F(0) domain and the peripheric stalk, which acts as a stator to hold the catalytic alpha(3)beta(3) subcomplex and subunit a/ATP6 static relative to the rotary elements. The polypeptide is ATP synthase subunit O, mitochondrial (Pisum sativum (Garden pea)).